Here is a 114-residue protein sequence, read N- to C-terminus: Histone H3-5 (114 aa).

The tract at residues 1–29 is disordered; that stretch reads NTGAKAPRKQLANKAARKSTNVNAVSGVK.

It belongs to the histone H3 family. The nucleosome is a histone octamer containing two molecules each of H2A, H2B, H3 and H4 assembled in one H3-H4 heterotetramer and two H2A-H2B heterodimers. The octamer wraps approximately 147 bp of DNA.

The protein localises to the nucleus. The protein resides in the chromosome. Functionally, core component of nucleosome. Nucleosomes wrap and compact DNA into chromatin, limiting DNA accessibility to the cellular machineries which require DNA as a template. Histones thereby play a central role in transcription regulation, DNA repair, DNA replication and chromosomal stability. DNA accessibility is regulated via a complex set of post-translational modifications of histones, also called histone code, and nucleosome remodeling. The polypeptide is Histone H3-5 (H3-5) (Stylonychia lemnae (Ciliate)).